Consider the following 228-residue polypeptide: UPF0502 protein Rfer_1648 (228 aa).

It belongs to the UPF0502 family.

The sequence is that of UPF0502 protein Rfer_1648 from Albidiferax ferrireducens (strain ATCC BAA-621 / DSM 15236 / T118) (Rhodoferax ferrireducens).